The chain runs to 230 residues: Chalcone--flavanone isomerase (230 aa).

Substrate-binding residues include Thr52, Asn117, and Ser194.

The protein belongs to the chalcone isomerase family.

It carries out the reaction a chalcone = a flavanone.. It participates in secondary metabolite biosynthesis; flavonoid biosynthesis. Functionally, catalyzes the intramolecular cyclization of bicyclic chalcones into tricyclic (S)-flavanones. Responsible for the isomerization of 4,2',4',6'-tetrahydroxychalcone (also termed chalcone) into naringenin. In Camellia sinensis (Tea plant), this protein is Chalcone--flavanone isomerase (CHI).